The chain runs to 400 residues: Nicotinate phosphoribosyltransferase (400 aa).

At histidine 220 the chain carries Phosphohistidine; by autocatalysis.

This sequence belongs to the NAPRTase family. Transiently phosphorylated on a His residue during the reaction cycle. Phosphorylation strongly increases the affinity for substrates and increases the rate of nicotinate D-ribonucleotide production. Dephosphorylation regenerates the low-affinity form of the enzyme, leading to product release.

It carries out the reaction nicotinate + 5-phospho-alpha-D-ribose 1-diphosphate + ATP + H2O = nicotinate beta-D-ribonucleotide + ADP + phosphate + diphosphate. It functions in the pathway cofactor biosynthesis; NAD(+) biosynthesis; nicotinate D-ribonucleotide from nicotinate: step 1/1. Its function is as follows. Catalyzes the synthesis of beta-nicotinate D-ribonucleotide from nicotinate and 5-phospho-D-ribose 1-phosphate at the expense of ATP. The protein is Nicotinate phosphoribosyltransferase of Citrobacter koseri (strain ATCC BAA-895 / CDC 4225-83 / SGSC4696).